A 190-amino-acid chain; its full sequence is MAQNDPGSGNLMDEFEEAFQSCLLSLTKQEPNSGTNKEEIELEVQKTTNRFIDVARQMEAFFLQKRFLVSTLKPYMLIKDENQDLSIEIQRKEALLQKHYNRLEEWKACLSDIQQGVHNRPTPPINPGMLQGPSGMQQPMGGGVPPRPGLMPGMPPGGMSPVGPMPPGQQHMLQAQQMQQLRMMGKLPPK.

The stretch at 76–108 (MLIKDENQDLSIEIQRKEALLQKHYNRLEEWKA) forms a coiled coil.

Belongs to the Mediator complex subunit 28 family. As to quaternary structure, component of the Mediator complex.

The protein localises to the nucleus. Its function is as follows. Component of the Mediator complex, a coactivator involved in the regulated transcription of nearly all RNA polymerase II-dependent genes. Mediator functions as a bridge to convey information from gene-specific regulatory proteins to the basal RNA polymerase II transcription machinery. Mediator is recruited to promoters by direct interactions with regulatory proteins and serves as a scaffold for the assembly of a functional preinitiation complex with RNA polymerase II and the general transcription factors. The protein is Mediator of RNA polymerase II transcription subunit 28 (MED28) of Drosophila pseudoobscura pseudoobscura (Fruit fly).